A 257-amino-acid chain; its full sequence is Na(+)-translocating NADH-quinone reductase subunit C (257 aa).

The helical transmembrane segment at 13–33 (LTVVVLLSLICSLIVASAAVL) threads the bilayer. Thr-224 bears the FMN phosphoryl threonine mark.

The protein belongs to the NqrC family. In terms of assembly, composed of six subunits; NqrA, NqrB, NqrC, NqrD, NqrE and NqrF. FMN is required as a cofactor.

It is found in the cell inner membrane. The catalysed reaction is a ubiquinone + n Na(+)(in) + NADH + H(+) = a ubiquinol + n Na(+)(out) + NAD(+). Its function is as follows. NQR complex catalyzes the reduction of ubiquinone-1 to ubiquinol by two successive reactions, coupled with the transport of Na(+) ions from the cytoplasm to the periplasm. NqrA to NqrE are probably involved in the second step, the conversion of ubisemiquinone to ubiquinol. This is Na(+)-translocating NADH-quinone reductase subunit C from Haemophilus ducreyi (strain 35000HP / ATCC 700724).